The following is a 279-amino-acid chain: Arabinooligosaccharides transport system permease protein AraQ (279 aa).

The next 6 helical transmembrane spans lie at 8–28 (ILSW…VFPL), 79–99 (VWIS…VGYA), 110–130 (FFFL…MLPL), 140–160 (VNTY…VFFF), 184–204 (GIFF…MAIL), and 245–265 (ILLA…IFFQ). The ABC transmembrane type-1 domain maps to 75–264 (FGNSVWISIV…VPIVILFIFF (190 aa)).

Belongs to the binding-protein-dependent transport system permease family. MalFG subfamily. As to quaternary structure, the complex is composed of two ATP-binding proteins (MsmX), two transmembrane proteins (AraP and AraQ) and a solute-binding protein (AraN).

Its subcellular location is the cell membrane. Part of the ABC transporter complex AraNPQ involved in the uptake of arabinooligosaccharides. Responsible for the translocation of the substrate across the membrane. This Halalkalibacterium halodurans (strain ATCC BAA-125 / DSM 18197 / FERM 7344 / JCM 9153 / C-125) (Bacillus halodurans) protein is Arabinooligosaccharides transport system permease protein AraQ (araQ).